A 230-amino-acid polypeptide reads, in one-letter code: Urease accessory protein UreE (230 aa).

The span at 200–210 (HAIHSHGTGHT) shows a compositional bias: basic residues. The interval 200 to 230 (HAIHSHGTGHTHSHDHDHSHSHGDHDHDHKH) is disordered. Residues 211–230 (HSHDHDHSHSHGDHDHDHKH) are compositionally biased toward basic and acidic residues.

The protein belongs to the UreE family.

It is found in the cytoplasm. Involved in urease metallocenter assembly. Binds nickel. Probably functions as a nickel donor during metallocenter assembly. The sequence is that of Urease accessory protein UreE from Yersinia enterocolitica serotype O:8 / biotype 1B (strain NCTC 13174 / 8081).